The primary structure comprises 86 residues: uncharacterized protein (86 aa).

Helical transmembrane passes span 20–38 (IQFW…SVYL) and 47–63 (FSTF…TKGV). Residues 67-86 (LSQRREQGKEQGREQGREQE) are disordered. Positions 69–86 (QRREQGKEQGREQGREQE) are enriched in basic and acidic residues.

It localises to the cell membrane. This is an uncharacterized protein from Haemophilus influenzae (strain ATCC 51907 / DSM 11121 / KW20 / Rd).